A 388-amino-acid chain; its full sequence is Interferon alpha/beta receptor 1b (388 aa).

2 consecutive Fibronectin type-III domains span residues 5 to 102 (LPQP…FCPD) and 109 to 211 (PPSR…TEGD). Residues 217–237 (IFLYFLVSMMVCFLLVLLSSY) form a helical membrane-spanning segment. Residues 308 to 357 (TAPPSELEQDSGRHIRQDSGDSGIYSTEGGSAQQGRSGGEPIRRDQEVDS) form a disordered region. Over residues 317–326 (DSGRHIRQDS) the composition is skewed to basic and acidic residues. The span at 331–342 (IYSTEGGSAQQG) shows a compositional bias: polar residues.

It belongs to the type II cytokine receptor family. In terms of assembly, heterodimer with IFNAR2; forming the receptor for type I interferon.

The protein localises to the cell membrane. It is found in the cytoplasm. The protein resides in the perinuclear region. In terms of biological role, together with IFNAR2, forms the heterodimeric receptor for type I interferons (including interferons alpha, beta, epsilon, omega and kappa). Type I interferon binding activates the JAK-STAT signaling cascade, resulting in transcriptional activation or repression of interferon-regulated genes that encode the effectors of the interferon response. Mechanistically, type I interferon-binding brings the IFNAR1 and IFNAR2 subunits into close proximity with one another, driving their associated Janus kinases (JAKs) (TYK2 bound to IFNAR1 and JAK1 bound to IFNAR2) to cross-phosphorylate one another. The activated kinases phosphorylate specific tyrosine residues on the intracellular domains of IFNAR1 and IFNAR2, forming docking sites for the STAT transcription factors. STAT proteins are then phosphorylated by the JAKs, promoting their translocation into the nucleus to regulate expression of interferon-regulated genes. The protein is Interferon alpha/beta receptor 1b of Oncorhynchus mykiss (Rainbow trout).